Here is a 742-residue protein sequence, read N- to C-terminus: MMSNDRKVTEIENSPVTEVRPEEHAWYPDDSALAAPPAATPAAISDQLPSDRYLNRELSWLDFNARVLALAADKSMPLLERAKFLAIFASNLDEFYMVRVAGLKRRDEMGLSVRSADGLTPREQLGRIGEQTQQLASRHARVFLDSVLPALGEEGIYIVTWADLDQAERDRLSTYFNEQVFPVLTPLAVDPAHPFPFVSGLSLNLAVTVRQPEDGTQHFARVKVPDNVDRFVELAAREASEEAAGTEGRTALRFLPMEELIAAFLPVLFPGMEIVEHHAFRITRNADFEVEEDRDEDLLQALERELARRRFGSPVRLEIADDMTESMLELLLRELDVHPGDVIEVPGLLDLSSLWQIYAVDRPTLKDRTFVPATHPAFAERETPKSIFATLREGDVLVHHPYDSFSTSVQRFIEQAAADPNVLAIKQTLYRTSGDSPIVRALIDAAEAGKQVVALVEIKARFDEQANIAWARALEQAGVHVAYGLVGLKTHCKTALVVRREGPTIRRYCHVGTGNYNSKTARLYEDVGLLTAAPDIGADLTDLFNSLTGYSRKLSYRNLLVAPHGIRAGIIDRVEREVAAHRAEGAHNGKGRIRLKMNALVDEQVIDALYRASRAGVRIEVVVRGICALRPGAQGISENIIVRSILGRFLEHSRILHFRAIDEFWIGSADMMHRNLDRRVEVMAQVKNPRLTAQLDELFESALDPCTRCWELGPDGQWTASPQEGHSVRDHQESLMERHRSP.

Asn-91 is an ATP binding site. Residues Arg-431 and Arg-461 each coordinate Mg(2+). His-491 functions as the Phosphohistidine intermediate in the catalytic mechanism. 3 residues coordinate ATP: Tyr-524, Arg-624, and His-652. Positions 718 to 742 (WTASPQEGHSVRDHQESLMERHRSP) are disordered. Over residues 726-742 (HSVRDHQESLMERHRSP) the composition is skewed to basic and acidic residues.

Belongs to the polyphosphate kinase 1 (PPK1) family. It depends on Mg(2+) as a cofactor. Post-translationally, an intermediate of this reaction is the autophosphorylated ppk in which a phosphate is covalently linked to a histidine residue through a N-P bond.

The enzyme catalyses [phosphate](n) + ATP = [phosphate](n+1) + ADP. In terms of biological role, catalyzes the reversible transfer of the terminal phosphate of ATP to form a long-chain polyphosphate (polyP). This Mycobacterium bovis (strain ATCC BAA-935 / AF2122/97) protein is Polyphosphate kinase.